A 320-amino-acid polypeptide reads, in one-letter code: o-succinylbenzoate synthase (320 aa).

Lysine 133 functions as the Proton donor in the catalytic mechanism. 3 residues coordinate Mg(2+): aspartate 161, glutamate 190, and aspartate 213. The active-site Proton acceptor is lysine 235.

The protein belongs to the mandelate racemase/muconate lactonizing enzyme family. MenC type 1 subfamily. It depends on a divalent metal cation as a cofactor.

The enzyme catalyses (1R,6R)-6-hydroxy-2-succinyl-cyclohexa-2,4-diene-1-carboxylate = 2-succinylbenzoate + H2O. It participates in quinol/quinone metabolism; 1,4-dihydroxy-2-naphthoate biosynthesis; 1,4-dihydroxy-2-naphthoate from chorismate: step 4/7. It functions in the pathway quinol/quinone metabolism; menaquinone biosynthesis. Converts 2-succinyl-6-hydroxy-2,4-cyclohexadiene-1-carboxylate (SHCHC) to 2-succinylbenzoate (OSB). This chain is o-succinylbenzoate synthase, found in Escherichia coli O6:K15:H31 (strain 536 / UPEC).